The primary structure comprises 125 residues: UPF0231 protein APL_0968 (125 aa).

Belongs to the UPF0231 family.

The sequence is that of UPF0231 protein APL_0968 from Actinobacillus pleuropneumoniae serotype 5b (strain L20).